The primary structure comprises 23 residues: Superoxide dismutase [Mn], mitochondrial (23 aa).

Belongs to the iron/manganese superoxide dismutase family. As to quaternary structure, homotetramer. The cofactor is Mn(2+).

The protein localises to the mitochondrion matrix. It carries out the reaction 2 superoxide + 2 H(+) = H2O2 + O2. Its function is as follows. Destroys superoxide anion radicals which are normally produced within the cells and which are toxic to biological systems. The chain is Superoxide dismutase [Mn], mitochondrial from Aquarana catesbeiana (American bullfrog).